We begin with the raw amino-acid sequence, 197 residues long: Cytochrome c biogenesis ATP-binding export protein CcmA (197 aa).

An ABC transporter domain is found at 1-196 (MSMLSLHQLQ…VIKSAQILQL (196 aa)). 35–42 (GANGSGKS) serves as a coordination point for ATP.

The protein belongs to the ABC transporter superfamily. CcmA exporter (TC 3.A.1.107) family. The complex is composed of two ATP-binding proteins (CcmA) and two transmembrane proteins (CcmB).

It localises to the cell inner membrane. It carries out the reaction heme b(in) + ATP + H2O = heme b(out) + ADP + phosphate + H(+). In terms of biological role, part of the ABC transporter complex CcmAB involved in the biogenesis of c-type cytochromes; once thought to export heme, this seems not to be the case, but its exact role is uncertain. Responsible for energy coupling to the transport system. The polypeptide is Cytochrome c biogenesis ATP-binding export protein CcmA (Rickettsia typhi (strain ATCC VR-144 / Wilmington)).